Reading from the N-terminus, the 1436-residue chain is Antigen WC1.1 (1436 aa).

An N-terminal signal peptide occupies residues 1-25; sequence MALGRHLSLRGLCVLLLGTMVGGQA. 3 SRCR domains span residues 28-131, 134-234, and 239-340; these read LRLK…VVCS, VRLA…VVCS, and VRLM…VICS. 2 disulfides stabilise this stretch: C66-C130 and C97-C107. An N-linked (GlcNAc...) asparagine glycan is attached at N162. 2 disulfide bridges follow: C172/C233 and C203/C213. N244 and N256 each carry an N-linked (GlcNAc...) asparagine glycan. Disulfide bonds link C265–C329, C278–C339, and C309–C319. N-linked (GlcNAc...) asparagine glycans are attached at residues N351, N424, and N444. 5 SRCR domains span residues 376 to 476, 481 to 581, 586 to 686, 689 to 789, and 794 to 895; these read LRLV…VICS, LRMV…IWCA, IRLV…VICS, VRLA…VVCS, and VQLM…VICS. 3 disulfides stabilise this stretch: C401/C465, C414/C475, and C445/C455. N-linked (GlcNAc...) asparagine glycosylation is found at N499 and N531. 6 disulfides stabilise this stretch: C506–C570, C519–C580, C550–C560, C611–C675, C624–C685, and C655–C665. N-linked (GlcNAc...) asparagine glycosylation occurs at N717. 2 disulfides stabilise this stretch: C727/C788 and C758/C768. The N-linked (GlcNAc...) asparagine glycan is linked to N799. Intrachain disulfides connect C820/C884, C833/C894, and C864/C874. Residues N897, N979, and N999 are each glycosylated (N-linked (GlcNAc...) asparagine). 3 consecutive SRCR domains span residues 931–1031, 1036–1136, and 1155–1255; these read LRLV…VICS, LRMV…ISCE, and LRLR…VRCS. Disulfide bonds link C956/C1020, C969/C1030, and C1000/C1010. Residues N1054 and N1086 are each glycosylated (N-linked (GlcNAc...) asparagine). Cystine bridges form between C1061–C1125, C1074–C1135, and C1105–C1115. Residues N1173 and N1214 are each glycosylated (N-linked (GlcNAc...) asparagine). 3 disulfides stabilise this stretch: C1180–C1244, C1193–C1254, and C1224–C1234. The segment at 1337-1410 is disordered; sequence EGLGSPDQMT…PGEGEESFWL (74 aa). A compositionally biased stretch (acidic residues) spans 1348 to 1358; it reads VPDENYDDAEE. The segment covering 1384–1393 has biased composition (polar residues); it reads RSSQTGSFLN. Residue N1393 is glycosylated (N-linked (GlcNAc...) asparagine).

As to expression, expressed on subsets of CD4-CD8- gamma delta T lymphocytes.

The protein resides in the secreted. The protein is Antigen WC1.1 of Bos taurus (Bovine).